The primary structure comprises 282 residues: Bifunctional protein FolD (282 aa).

NADP(+) contacts are provided by residues 165–167 (GRG), Thr192, and Val233.

This sequence belongs to the tetrahydrofolate dehydrogenase/cyclohydrolase family. Homodimer.

It catalyses the reaction (6R)-5,10-methylene-5,6,7,8-tetrahydrofolate + NADP(+) = (6R)-5,10-methenyltetrahydrofolate + NADPH. It carries out the reaction (6R)-5,10-methenyltetrahydrofolate + H2O = (6R)-10-formyltetrahydrofolate + H(+). It functions in the pathway one-carbon metabolism; tetrahydrofolate interconversion. Its function is as follows. Catalyzes the oxidation of 5,10-methylenetetrahydrofolate to 5,10-methenyltetrahydrofolate and then the hydrolysis of 5,10-methenyltetrahydrofolate to 10-formyltetrahydrofolate. This chain is Bifunctional protein FolD, found in Mycobacterium leprae (strain Br4923).